A 170-amino-acid polypeptide reads, in one-letter code: Photosystem II extrinsic protein V (170 aa).

An N-terminal signal peptide occupies residues 1-33; sequence MASLFASLGRSLIKLLIVLPVIIGLSISSPAMA. Residues C70, C73, H74, and H125 each coordinate heme c.

It belongs to the cytochrome c family. PsbV subfamily. PSII is composed of 1 copy each of membrane proteins PsbA, PsbB, PsbC, PsbD, PsbE, PsbF, PsbH, PsbI, PsbJ, PsbK, PsbL, PsbM, PsbT, PsbX, PsbY, Psb30/Ycf12, peripheral proteins PsbO, CyanoQ (PsbQ), PsbU, PsbV and a large number of cofactors. It forms dimeric complexes. Heme c is required as a cofactor.

The protein localises to the cellular thylakoid membrane. Its function is as follows. One of the extrinsic, lumenal subunits of photosystem II (PSII). PSII is a light-driven water plastoquinone oxidoreductase, using light energy to abstract electrons from H(2)O, generating a proton gradient subsequently used for ATP formation. The extrinsic proteins stabilize the structure of photosystem II oxygen-evolving complex (OEC), the ion environment of oxygen evolution and protect the OEC against heat-induced inactivation. Low-potential cytochrome c that plays a role in the OEC of PSII. The protein is Photosystem II extrinsic protein V of Prochlorococcus marinus (strain MIT 9313).